The sequence spans 183 residues: Photosystem I assembly protein Ycf4 (183 aa).

2 helical membrane-spanning segments follow: residues 17–39 and 59–81; these read NYLL…FLSY and FIPQ…IYIY.

It belongs to the Ycf4 family.

The protein localises to the plastid. Its subcellular location is the chloroplast thylakoid membrane. Its function is as follows. Seems to be required for the assembly of the photosystem I complex. This Cyanidium caldarium (Red alga) protein is Photosystem I assembly protein Ycf4.